An 851-amino-acid polypeptide reads, in one-letter code: Phosphatidylinositol 4-kinase pik1 (851 aa).

The 123-residue stretch at 1-123 folds into the PIK helical domain; sequence MPSSNSGNEL…KICKRLYNRI (123 aa). Ser-202, Ser-219, Ser-222, and Ser-235 each carry phosphoserine. Phosphotyrosine is present on Tyr-236. The tract at residues 384–404 is disordered; that stretch reads LQDSTDNDISESESEGGDLSM. Positions 388 to 399 are enriched in acidic residues; the sequence is TDNDISESESEG. The PI3K/PI4K catalytic domain maps to 558–836; it reads YAKKERIRKS…LIQKANCSVW (279 aa). Residues 564–570 are G-loop; sequence IRKSSPY. Residues 706 to 714 form a catalytic loop region; that stretch reads QLKDRHNGN. The segment at 725 to 749 is activation loop; the sequence is HIDFGFLLTNTPGNVGFESAPFKLT.

Belongs to the PI3/PI4-kinase family. As to quaternary structure, interacts with cdc4 and cam2.

The protein resides in the golgi apparatus. Its subcellular location is the nucleus. The catalysed reaction is a 1,2-diacyl-sn-glycero-3-phospho-(1D-myo-inositol) + ATP = a 1,2-diacyl-sn-glycero-3-phospho-(1D-myo-inositol 4-phosphate) + ADP + H(+). Functionally, acts on phosphatidylinositol (PI) in the first committed step in the production of the second messenger inositol 1,4,5,-trisphosphate. PIK1 is part of a nuclear phosphoinositide cycle and could control cytokinesis through the actin cytoskeleton. The sequence is that of Phosphatidylinositol 4-kinase pik1 (pik1) from Schizosaccharomyces pombe (strain 972 / ATCC 24843) (Fission yeast).